Reading from the N-terminus, the 139-residue chain is Nucleoside diphosphate kinase (139 aa).

ATP is bound by residues K11, F59, R87, T93, R104, and N114. The active-site Pros-phosphohistidine intermediate is the H117.

The protein belongs to the NDK family. In terms of assembly, homotetramer. Mg(2+) is required as a cofactor.

It is found in the cytoplasm. It catalyses the reaction a 2'-deoxyribonucleoside 5'-diphosphate + ATP = a 2'-deoxyribonucleoside 5'-triphosphate + ADP. The catalysed reaction is a ribonucleoside 5'-diphosphate + ATP = a ribonucleoside 5'-triphosphate + ADP. Functionally, major role in the synthesis of nucleoside triphosphates other than ATP. The ATP gamma phosphate is transferred to the NDP beta phosphate via a ping-pong mechanism, using a phosphorylated active-site intermediate. This chain is Nucleoside diphosphate kinase, found in Wolbachia pipientis wMel.